Consider the following 537-residue polypeptide: Lysine--tRNA ligase (537 aa).

The short motif at 30-38 (PSGNIHIGN) is the 'HIGH' region element. A 'KMSKS' region motif is present at residues 276–280 (AMSSS).

It belongs to the class-I aminoacyl-tRNA synthetase family.

Its subcellular location is the cytoplasm. It catalyses the reaction tRNA(Lys) + L-lysine + ATP = L-lysyl-tRNA(Lys) + AMP + diphosphate. The polypeptide is Lysine--tRNA ligase (Methanosarcina barkeri).